The primary structure comprises 408 residues: Imidazolonepropionase (408 aa).

Fe(3+) is bound by residues H73 and H75. The Zn(2+) site is built by H73 and H75. 4-imidazolone-5-propanoate contacts are provided by R82, Y145, and H178. Residue Y145 coordinates N-formimidoyl-L-glutamate. H243 serves as a coordination point for Fe(3+). Residue H243 coordinates Zn(2+). Residue Q246 participates in 4-imidazolone-5-propanoate binding. D318 provides a ligand contact to Fe(3+). D318 contacts Zn(2+). N-formimidoyl-L-glutamate contacts are provided by N320 and G322. S323 contributes to the 4-imidazolone-5-propanoate binding site.

The protein belongs to the metallo-dependent hydrolases superfamily. HutI family. It depends on Zn(2+) as a cofactor. Fe(3+) is required as a cofactor.

It localises to the cytoplasm. The catalysed reaction is 4-imidazolone-5-propanoate + H2O = N-formimidoyl-L-glutamate. It participates in amino-acid degradation; L-histidine degradation into L-glutamate; N-formimidoyl-L-glutamate from L-histidine: step 3/3. Functionally, catalyzes the hydrolytic cleavage of the carbon-nitrogen bond in imidazolone-5-propanoate to yield N-formimidoyl-L-glutamate. It is the third step in the universal histidine degradation pathway. This chain is Imidazolonepropionase, found in Shewanella piezotolerans (strain WP3 / JCM 13877).